A 360-amino-acid polypeptide reads, in one-letter code: MKKLLALAVIAPLLISCSSSTKKGETYNEAWVKDTNGFDILMGQFANNIENLWGYKEVLIAGPKDYVKYTDQFQTRSHINFDDGTITVETIAGTEPTAHLRRAIIKTLLMGDDPTSVDLYSDVDDIKISKEPFLYGQVLDNTGQPIRWEGRATTFADYLLKTRLKSRSNGLRIIYSVTINLVPNHLDKRAHKYIGMVRQASRKYGVDESLILAIMQTESSFNPYAVSHADALGLMQVVQHSAGKDVFRSQGKSGTPSRNFLFDPASNIDTGTAYLAMLNNVYLSGIENPTSRRYAVITAYNGGAGSVLRVFSNDKIQAANMINRMSPGDVYQILTTRHPSAESRRYLYKVNSAQRSYRRR.

Residues 1-16 (MKKLLALAVIAPLLIS) form the signal peptide. The N-palmitoyl cysteine moiety is linked to residue cysteine 17. Cysteine 17 carries S-diacylglycerol cysteine lipidation.

The protein belongs to the transglycosylase Slt family.

It localises to the cell outer membrane. It carries out the reaction Exolytic cleavage of the (1-&gt;4)-beta-glycosidic linkage between N-acetylmuramic acid (MurNAc) and N-acetylglucosamine (GlcNAc) residues in peptidoglycan, from either the reducing or the non-reducing ends of the peptidoglycan chains, with concomitant formation of a 1,6-anhydrobond in the MurNAc residue.. In terms of biological role, murein-degrading enzyme. May play a role in recycling of muropeptides during cell elongation and/or cell division. The chain is Membrane-bound lytic murein transglycosylase C from Salmonella paratyphi A (strain ATCC 9150 / SARB42).